The following is a 297-amino-acid chain: Guanylate kinase (297 aa).

The Guanylate kinase-like domain occupies 5 to 184; the sequence is GKVIIISGPS…AVSKITDILI (180 aa). An ATP-binding site is contributed by 12–19; that stretch reads GPSGVGKG. The unknown stretch occupies residues 205–297; that stretch reads ENIVDQKYTY…IKQRSDFSGD (93 aa).

It belongs to the guanylate kinase family.

It is found in the cytoplasm. It carries out the reaction GMP + ATP = GDP + ADP. Essential for recycling GMP and indirectly, cGMP. The sequence is that of Guanylate kinase (gmk) from Mesoplasma florum (strain ATCC 33453 / NBRC 100688 / NCTC 11704 / L1) (Acholeplasma florum).